The primary structure comprises 210 residues: Outer-membrane lipoprotein carrier protein (210 aa).

The signal sequence occupies residues 1-26 (MHMIRRAAGALAVFAVAALAAAPAWA).

The protein belongs to the LolA family. Monomer.

It is found in the periplasm. Functionally, participates in the translocation of lipoproteins from the inner membrane to the outer membrane. Only forms a complex with a lipoprotein if the residue after the N-terminal Cys is not an aspartate (The Asp acts as a targeting signal to indicate that the lipoprotein should stay in the inner membrane). The protein is Outer-membrane lipoprotein carrier protein of Bordetella bronchiseptica (strain ATCC BAA-588 / NCTC 13252 / RB50) (Alcaligenes bronchisepticus).